The sequence spans 465 residues: Ribulose bisphosphate carboxylase large chain (465 aa).

The residue at position 4 (lysine 4) is an N6,N6,N6-trimethyllysine. The substrate site is built by asparagine 113 and threonine 163. The active-site Proton acceptor is the lysine 165. Position 167 (lysine 167) interacts with substrate. Mg(2+) is bound by residues lysine 191, aspartate 193, and glutamate 194. N6-carboxylysine is present on lysine 191. Histidine 284 (proton acceptor) is an active-site residue. 3 residues coordinate substrate: arginine 285, histidine 317, and serine 369.

Belongs to the RuBisCO large chain family. Type I subfamily. Heterohexadecamer of 8 large chains and 8 small chains; disulfide-linked. The disulfide link is formed within the large subunit homodimers. Requires Mg(2+) as cofactor. In terms of processing, the disulfide bond which can form in the large chain dimeric partners within the hexadecamer appears to be associated with oxidative stress and protein turnover.

It localises to the plastid. Its subcellular location is the chloroplast. The catalysed reaction is 2 (2R)-3-phosphoglycerate + 2 H(+) = D-ribulose 1,5-bisphosphate + CO2 + H2O. The enzyme catalyses D-ribulose 1,5-bisphosphate + O2 = 2-phosphoglycolate + (2R)-3-phosphoglycerate + 2 H(+). Functionally, ruBisCO catalyzes two reactions: the carboxylation of D-ribulose 1,5-bisphosphate, the primary event in carbon dioxide fixation, as well as the oxidative fragmentation of the pentose substrate in the photorespiration process. Both reactions occur simultaneously and in competition at the same active site. In Hamamelis mollis (Chinese witch hazel), this protein is Ribulose bisphosphate carboxylase large chain.